The primary structure comprises 499 residues: Glycerol kinase (499 aa).

Thr13 lines the ADP pocket. The ATP site is built by Thr13, Thr14, and Ser15. A sn-glycerol 3-phosphate-binding site is contributed by Thr13. Residue Arg17 coordinates ADP. Residues Arg83, Glu84, Tyr135, and Asp245 each contribute to the sn-glycerol 3-phosphate site. Glycerol contacts are provided by Arg83, Glu84, Tyr135, Asp245, and Gln246. ADP-binding residues include Thr267 and Gly310. ATP contacts are provided by Thr267, Gly310, Gln314, and Ala411. Residues Ala411 and Asn415 each coordinate ADP.

It belongs to the FGGY kinase family.

It carries out the reaction glycerol + ATP = sn-glycerol 3-phosphate + ADP + H(+). It participates in polyol metabolism; glycerol degradation via glycerol kinase pathway; sn-glycerol 3-phosphate from glycerol: step 1/1. Its activity is regulated as follows. Inhibited by fructose 1,6-bisphosphate (FBP). Its function is as follows. Key enzyme in the regulation of glycerol uptake and metabolism. Catalyzes the phosphorylation of glycerol to yield sn-glycerol 3-phosphate. The polypeptide is Glycerol kinase (Xylella fastidiosa (strain M23)).